Consider the following 487-residue polypeptide: uncharacterized protein (487 aa).

An N-terminal signal peptide occupies residues 1–31 (MRFHRQGISAIIGVLLIVLLGFCWKLSGSYG). N-linked (GlcNAc...) asparagine glycans are attached at residues N40, N68, N150, N220, N304, N367, N442, and N448. Residues 141–176 (LERRHGRFGNGTNGDHPKGPPPPPPPPDEKGRGSQK) are disordered.

N-glycosylated.

This is an uncharacterized protein from Saccharomyces cerevisiae (strain ATCC 204508 / S288c) (Baker's yeast).